Here is an 86-residue protein sequence, read N- to C-terminus: Putative membrane protein insertion efficiency factor (86 aa).

This sequence belongs to the UPF0161 family.

It localises to the cell inner membrane. In terms of biological role, could be involved in insertion of integral membrane proteins into the membrane. The protein is Putative membrane protein insertion efficiency factor of Histophilus somni (strain 129Pt) (Haemophilus somnus).